Reading from the N-terminus, the 616-residue chain is Dihydroxy-acid dehydratase (616 aa).

Position 81 (Asp81) interacts with Mg(2+). Cys122 contributes to the [2Fe-2S] cluster binding site. Asp123 and Lys124 together coordinate Mg(2+). An N6-carboxylysine modification is found at Lys124. Residue Cys195 participates in [2Fe-2S] cluster binding. A Mg(2+)-binding site is contributed by Glu491. Catalysis depends on Ser517, which acts as the Proton acceptor.

This sequence belongs to the IlvD/Edd family. In terms of assembly, homodimer. [2Fe-2S] cluster is required as a cofactor. It depends on Mg(2+) as a cofactor.

The enzyme catalyses (2R)-2,3-dihydroxy-3-methylbutanoate = 3-methyl-2-oxobutanoate + H2O. The catalysed reaction is (2R,3R)-2,3-dihydroxy-3-methylpentanoate = (S)-3-methyl-2-oxopentanoate + H2O. It participates in amino-acid biosynthesis; L-isoleucine biosynthesis; L-isoleucine from 2-oxobutanoate: step 3/4. It functions in the pathway amino-acid biosynthesis; L-valine biosynthesis; L-valine from pyruvate: step 3/4. Functionally, functions in the biosynthesis of branched-chain amino acids. Catalyzes the dehydration of (2R,3R)-2,3-dihydroxy-3-methylpentanoate (2,3-dihydroxy-3-methylvalerate) into 2-oxo-3-methylpentanoate (2-oxo-3-methylvalerate) and of (2R)-2,3-dihydroxy-3-methylbutanoate (2,3-dihydroxyisovalerate) into 2-oxo-3-methylbutanoate (2-oxoisovalerate), the penultimate precursor to L-isoleucine and L-valine, respectively. This chain is Dihydroxy-acid dehydratase, found in Azoarcus sp. (strain BH72).